A 136-amino-acid polypeptide reads, in one-letter code: Small ribosomal subunit protein uS8 (136 aa).

This sequence belongs to the universal ribosomal protein uS8 family. As to quaternary structure, part of the 30S ribosomal subunit. Contacts proteins S5 and S12.

Its function is as follows. One of the primary rRNA binding proteins, it binds directly to 16S rRNA central domain where it helps coordinate assembly of the platform of the 30S subunit. The polypeptide is Small ribosomal subunit protein uS8 (Frankia alni (strain DSM 45986 / CECT 9034 / ACN14a)).